We begin with the raw amino-acid sequence, 244 residues long: Venom nerve growth factor 1 (244 aa).

Positions 1–18 (MSMLCYTLIIAFLIGIWA) are cleaved as a signal peptide. The propeptide occupies 19 to 125 (APKSEDNVPL…TLNRNIRAKR (107 aa)). Residues 47 to 66 (GLKTSRNTDQRHPAPKKAED) are compositionally biased toward basic and acidic residues. The tract at residues 47 to 67 (GLKTSRNTDQRHPAPKKAEDQ) is disordered. Disulfide bonds link C139–C205, C181–C233, and C193–C235.

The protein belongs to the NGF-beta family. Homodimer; non-covalently linked. Expressed by the venom gland.

The protein localises to the secreted. Nerve growth factor is important for the development and maintenance of the sympathetic and sensory nervous systems. It stimulates division and differentiation of sympathetic and embryonic sensory neurons as well as basal forebrain cholinergic neurons in the brain. Its relevance in the snake venom is not clear. However, it has been shown to inhibit metalloproteinase-dependent proteolysis of platelet glycoprotein Ib alpha, suggesting a metalloproteinase inhibition to prevent metalloprotease autodigestion and/or protection against prey proteases. Binds a lipid between the two protein chains in the homodimer. The lipid-bound form promotes histamine relase from mouse mast cells, contrary to the lipid-free form. The sequence is that of Venom nerve growth factor 1 from Notechis scutatus scutatus (Mainland tiger snake).